We begin with the raw amino-acid sequence, 191 residues long: Octanoyltransferase (191 aa).

The 176-residue stretch at 10–185 folds into the BPL/LPL catalytic domain; the sequence is ENSHDEIWLV…NILALLNNPP (176 aa). Substrate contacts are provided by residues 49–56, 116–118, and 129–131; these read RGGQVTYH, SLG, and GLA. The active-site Acyl-thioester intermediate is the cysteine 147.

This sequence belongs to the LipB family.

It localises to the cytoplasm. The enzyme catalyses octanoyl-[ACP] + L-lysyl-[protein] = N(6)-octanoyl-L-lysyl-[protein] + holo-[ACP] + H(+). It participates in protein modification; protein lipoylation via endogenous pathway; protein N(6)-(lipoyl)lysine from octanoyl-[acyl-carrier-protein]: step 1/2. Functionally, catalyzes the transfer of endogenously produced octanoic acid from octanoyl-acyl-carrier-protein onto the lipoyl domains of lipoate-dependent enzymes. Lipoyl-ACP can also act as a substrate although octanoyl-ACP is likely to be the physiological substrate. The sequence is that of Octanoyltransferase from Salmonella choleraesuis (strain SC-B67).